The sequence spans 230 residues: DNA ADP-ribosyl transferase (230 aa).

Residues 26–230 (WIVWHFTHAD…KYVIKPGMYY (205 aa)) enclose the DarT domain. Residues 30 to 32 (HFT), Gly39, Leu47, and Arg67 contribute to the NAD(+) site. The Proton acceptor role is filled by Arg67. Residue Glu183 is part of the active site.

It belongs to the DarT ADP-ribosyltransferase family. Interacts with cognate antitoxin DarG (via C-terminus); this heterodimeric complex neutralizes the toxic effect of DarT by preventing ssDNA binding to DarT and consequently inactivating the toxin by direct protein-protein interactions.

The catalysed reaction is a thymidine in DNA + NAD(+) = an N-(ADP-alpha-D-ribosyl)-thymidine in DNA + nicotinamide + H(+). Toxic component of the hybrid type II/IV toxin-antitoxin (TA) system DarTG, which plays a crucial role in controlling bacterial growth and bacteriophage infection. ADP-ribosylates ssDNA, preferentially in the motif TTTW. In case of phage infection, DarT toxin ADP-ribosylates DNA, which inhibits both viral DNA and RNA synthesis and leads to abortive infection. Its toxic effect is neutralized by cognate antitoxin DarG. The sequence is that of DNA ADP-ribosyl transferase from Mycobacterium bovis (strain BCG / Pasteur 1173P2).